The chain runs to 214 residues: MAQAAGLPQASTASGQPYVSKLVLLGSSSVGKTSLALRYMKQDFSNVLPTVGCAFFTKVLDLGSSSLKLEIWDTAGQEKYQSVCHLYFRGANAALLVYDITRKDSFHKAQQWLEDLEKEFQPGEVVVMLVGNKTDLGEEREVTFQEGKEFAESKSLLFMETSAKLNYQVSEIFNTVAQELLQRAGDTGSSRPQEGEAVALNQEPPIRQRQCCAR.

Phosphoserine is present on serine 29. The GTP site is built by glycine 31, lysine 32, threonine 33, and threonine 50. Mg(2+)-binding residues include threonine 33, threonine 50, and aspartate 73. The Switch 1 signature appears at 43-54 (DFSNVLPTVGCA). The short motif at 75 to 91 (AGQEKYQSVCHLYFRGA) is the Switch 2 element. GTP is bound by residues glycine 76, asparagine 132, lysine 133, aspartate 135, and alanine 163. Positions 183-204 (RAGDTGSSRPQEGEAVALNQEP) are disordered. 2 S-geranylgeranyl cysteine lipidation sites follow: cysteine 211 and cysteine 212.

The protein belongs to the small GTPase superfamily. Rab family. It depends on Mg(2+) as a cofactor. Expressed in kidney, liver, and intestine mainly by epithelial cells. Expressed in hippocampus (at protein level).

The protein localises to the recycling endosome membrane. The protein resides in the melanosome. Its subcellular location is the cell projection. It is found in the dendrite. The catalysed reaction is GTP + H2O = GDP + phosphate + H(+). Its activity is regulated as follows. Regulated by guanine nucleotide exchange factors (GEFs) which promote the exchange of bound GDP for free GTP. Regulated by GTPase activating proteins (GAPs) which increase the GTP hydrolysis activity. Inhibited by GDP dissociation inhibitors (GDIs). In terms of biological role, the small GTPases Rab are key regulators of intracellular membrane trafficking, from the formation of transport vesicles to their fusion with membranes. Rabs cycle between an inactive GDP-bound form and an active GTP-bound form that is able to recruit to membranes different set of downstream effectors directly responsible for vesicle formation, movement, tethering and fusion. RAB17 is involved in transcytosis, the directed movement of endocytosed material through the cell and its exocytosis from the plasma membrane at the opposite side. Mainly observed in epithelial cells, transcytosis mediates, for instance, the transcellular transport of immunoglobulins from the basolateral surface to the apical surface. Most probably controls membrane trafficking through apical recycling endosomes in a post-endocytic step of transcytosis. Required for melanosome transport and release from melanocytes, it also regulates dendrite and dendritic spine development. May also play a role in cell migration. This chain is Ras-related protein Rab-17, found in Mus musculus (Mouse).